The following is a 367-amino-acid chain: Queuine tRNA-ribosyltransferase (367 aa).

Catalysis depends on Asp92, which acts as the Proton acceptor. Residues 92 to 96 (DSGGF), Asp146, Gln188, and Gly215 contribute to the substrate site. The interval 246 to 252 (GVGTPKD) is RNA binding. Asp265 acts as the Nucleophile in catalysis. 4 residues coordinate Zn(2+): Cys303, Cys305, Cys308, and His334.

It belongs to the queuine tRNA-ribosyltransferase family. In terms of assembly, homodimer. Within each dimer, one monomer is responsible for RNA recognition and catalysis, while the other monomer binds to the replacement base PreQ1. The cofactor is Zn(2+).

The catalysed reaction is 7-aminomethyl-7-carbaguanine + guanosine(34) in tRNA = 7-aminomethyl-7-carbaguanosine(34) in tRNA + guanine. It functions in the pathway tRNA modification; tRNA-queuosine biosynthesis. In terms of biological role, catalyzes the base-exchange of a guanine (G) residue with the queuine precursor 7-aminomethyl-7-deazaguanine (PreQ1) at position 34 (anticodon wobble position) in tRNAs with GU(N) anticodons (tRNA-Asp, -Asn, -His and -Tyr). Catalysis occurs through a double-displacement mechanism. The nucleophile active site attacks the C1' of nucleotide 34 to detach the guanine base from the RNA, forming a covalent enzyme-RNA intermediate. The proton acceptor active site deprotonates the incoming PreQ1, allowing a nucleophilic attack on the C1' of the ribose to form the product. After dissociation, two additional enzymatic reactions on the tRNA convert PreQ1 to queuine (Q), resulting in the hypermodified nucleoside queuosine (7-(((4,5-cis-dihydroxy-2-cyclopenten-1-yl)amino)methyl)-7-deazaguanosine). This is Queuine tRNA-ribosyltransferase from Francisella tularensis subsp. novicida (strain U112).